Consider the following 320-residue polypeptide: uncharacterized protein (320 aa).

One can recognise an Arf-GAP domain in the interval 13–132 (ALVLKSLLRE…VLYPEIPSPE (120 aa)). Residues 28-52 (CADCKRNEQPRWASWNLGVFICIRC) form a C4-type zinc finger. 3 disordered regions span residues 153–212 (NTAS…STRQ), 227–261 (RPQV…YGAF), and 284–320 (NVTS…DVWK). The segment covering 154–176 (TASRSSSAHSVKSTSSATVTNVT) has biased composition (low complexity). Composition is skewed to polar residues over residues 183-210 (SATT…APST) and 228-244 (PQVS…YQNL). 2 stretches are compositionally biased toward low complexity: residues 245-257 (PSPV…SSQP) and 295-310 (SPVQ…SLDS).

The protein localises to the cytoplasm. Its subcellular location is the golgi apparatus. Its function is as follows. GTPase-activating protein for the ADP ribosylation factor family. This is an uncharacterized protein from Schizosaccharomyces pombe (strain 972 / ATCC 24843) (Fission yeast).